Reading from the N-terminus, the 439-residue chain is Xylose isomerase (439 aa).

Catalysis depends on residues histidine 101 and aspartate 104. Residues glutamate 232, glutamate 268, histidine 271, aspartate 296, aspartate 307, aspartate 309, and aspartate 339 each contribute to the Mg(2+) site.

The protein belongs to the xylose isomerase family. Homotetramer. Requires Mg(2+) as cofactor.

The protein resides in the cytoplasm. The catalysed reaction is alpha-D-xylose = alpha-D-xylulofuranose. The polypeptide is Xylose isomerase (xylA) (Lactococcus lactis subsp. lactis (strain IL1403) (Streptococcus lactis)).